The primary structure comprises 453 residues: Phenolic glucoside malonyltransferase 1 (453 aa).

H165 functions as the Proton acceptor in the catalytic mechanism. The HXXXD motif signature appears at 165 to 169 (HVAGD). Malonyl-CoA is bound by residues K254, H266, and 268–269 (TS). Catalysis depends on D394, which acts as the Proton acceptor. The short motif at 394-398 (DFGWG) is the DFGWG motif element.

Belongs to the plant acyltransferase family. Phenolic glucoside malonyltransferase subfamily. As to quaternary structure, monomer. As to expression, highly expressed in flower. Also expressed in flower bud, stem, root and leaf.

The catalysed reaction is a flavonol 3-O-beta-D-glucoside + malonyl-CoA = a flavonol 3-O-(6-O-malonyl-beta-D-glucoside) + CoA. It catalyses the reaction a flavonol 7-O-beta-D-glucoside + malonyl-CoA = a flavonol 7-O-(6-O-malonyl-beta-D-glucoside) + CoA. Malonyltransferase with broad substrate specificity acting on phenolic glucosides including xenobiotic naphthols. Has activity against flavonoid 7-O-glucosides, flavonoid 3-O-glucosides and naphthol glucosides, and to a lesser extent against coumarin glucosides in vitro. Prefers malonyl-CoA as an acyl donor, but also active with succinyl-CoA and methylmalonyl-CoA, but not with acetyl-CoA. The polypeptide is Phenolic glucoside malonyltransferase 1 (Nicotiana tabacum (Common tobacco)).